The chain runs to 122 residues: Large ribosomal subunit protein uL14c (122 aa).

It belongs to the universal ribosomal protein uL14 family. Part of the 50S ribosomal subunit.

It localises to the plastid. It is found in the chloroplast. Binds to 23S rRNA. This chain is Large ribosomal subunit protein uL14c, found in Physcomitrium patens (Spreading-leaved earth moss).